Here is a 142-residue protein sequence, read N- to C-terminus: Small ribosomal subunit protein bS6 (142 aa).

The segment at 103 to 142 is disordered; it reads KAAESREQRAPRGEDRPARVVADDVDDSDDDTDDEDSNDE. Basic and acidic residues predominate over residues 105–124; that stretch reads AESREQRAPRGEDRPARVVA. Residues 125 to 142 show a composition bias toward acidic residues; that stretch reads DDVDDSDDDTDDEDSNDE.

Belongs to the bacterial ribosomal protein bS6 family.

In terms of biological role, binds together with bS18 to 16S ribosomal RNA. In Hahella chejuensis (strain KCTC 2396), this protein is Small ribosomal subunit protein bS6.